A 216-amino-acid polypeptide reads, in one-letter code: [5-(aminomethyl)furan-3-yl]methyl phosphate kinase (216 aa).

Residues 5–9 (KIGGS), G39, D142, 147–152 (YDKFPG), and G166 contribute to the ATP site.

The protein belongs to the MfnE family. Homotrimer. It depends on Mg(2+) as a cofactor.

It catalyses the reaction [5-(aminomethyl)-3-furyl]methyl phosphate + ATP = [5-(aminomethyl)furan-3-yl]methyl diphosphate + ADP. It functions in the pathway cofactor biosynthesis; methanofuran biosynthesis. Its activity is regulated as follows. Inhibited by EDTA. Its function is as follows. Catalyzes the formation of 5-(aminomethyl)-3-furanmethanol diphosphate (F1-PP) from 5-(aminomethyl)-3-furanmethanol phosphate (F1-P) and ATP. In vitro, can also act as an adenylate kinase that catalyzes the transfer of a phosphoryl group from ATP to AMP, generating two molecules of ADP. The chain is [5-(aminomethyl)furan-3-yl]methyl phosphate kinase from Methanocaldococcus jannaschii (strain ATCC 43067 / DSM 2661 / JAL-1 / JCM 10045 / NBRC 100440) (Methanococcus jannaschii).